The sequence spans 147 residues: Large ribosomal subunit protein uL13 (147 aa).

This sequence belongs to the universal ribosomal protein uL13 family. As to quaternary structure, part of the 50S ribosomal subunit.

Functionally, this protein is one of the early assembly proteins of the 50S ribosomal subunit, although it is not seen to bind rRNA by itself. It is important during the early stages of 50S assembly. This Kocuria rhizophila (strain ATCC 9341 / DSM 348 / NBRC 103217 / DC2201) protein is Large ribosomal subunit protein uL13.